Consider the following 191-residue polypeptide: Peptidyl-tRNA hydrolase (191 aa).

Residue Tyr17 coordinates tRNA. Residue His22 is the Proton acceptor of the active site. TRNA-binding residues include Tyr68, Asn70, and Asn116.

This sequence belongs to the PTH family. Monomer.

It localises to the cytoplasm. It carries out the reaction an N-acyl-L-alpha-aminoacyl-tRNA + H2O = an N-acyl-L-amino acid + a tRNA + H(+). In terms of biological role, hydrolyzes ribosome-free peptidyl-tRNAs (with 1 or more amino acids incorporated), which drop off the ribosome during protein synthesis, or as a result of ribosome stalling. Catalyzes the release of premature peptidyl moieties from peptidyl-tRNA molecules trapped in stalled 50S ribosomal subunits, and thus maintains levels of free tRNAs and 50S ribosomes. In Francisella tularensis subsp. tularensis (strain FSC 198), this protein is Peptidyl-tRNA hydrolase.